Reading from the N-terminus, the 491-residue chain is Transcription factor AP-2-alpha (491 aa).

A disordered region spans residues 74–161; sequence GASNGTARLP…GQRQSQESGL (88 aa). Residues 111–116 carry the PPxY motif motif; sequence YFPPPY. Low complexity-rich tracts occupy residues 119–128 and 142–155; these read IYPQSQDPYS and QPQP…GQRQ. Glycyl lysine isopeptide (Lys-Gly) (interchain with G-Cter in SUMO2) cross-links involve residues lysine 231 and lysine 238. Serine 293 is subject to Phosphoserine; by PKA. Residues 334–464 are H-S-H (helix-span-helix), dimerization; sequence RRKAANVTLL…YLTEALKAMD (131 aa). Residues 468-481 show a composition bias toward polar residues; sequence LSNNPNSHTDNSAK. The interval 468–491 is disordered; that stretch reads LSNNPNSHTDNSAKSSDKEEKHRK. Residues 482 to 491 show a composition bias toward basic and acidic residues; the sequence is SSDKEEKHRK.

Belongs to the AP-2 family. Binds DNA as a dimer. Can form homodimers or heterodimers with other AP-2 family members. Interacts with WWOX. Interacts with CITED4. Interacts with UBE2I. Interacts with RALBP1 in a complex also containing EPN1 and NUMB during interphase and mitosis. Interacts with KCTD1; this interaction represses transcription activation. Interacts (via C-terminus) with CITED2 (via C-terminus); the interaction stimulates TFAP2A-transcriptional activation. Interacts (via N-terminus) with EP300 (via N-terminus); the interaction requires CITED2. Interacts with KCTD15; this interaction inhibits TFAP2A transcriptional activation.

The protein resides in the nucleus. In terms of biological role, sequence-specific DNA-binding protein that interacts with inducible viral and cellular enhancer elements to regulate transcription of selected genes. AP-2 factors bind to the consensus sequence 5'-GCCNNNGGC-3' and activate genes involved in a large spectrum of important biological functions including proper eye, face, body wall, limb and neural tube development. They also suppress a number of genes including MCAM/MUC18, C/EBP alpha and MYC. AP-2-alpha is the only AP-2 protein required for early morphogenesis of the lens vesicle. Together with the CITED2 coactivator, stimulates the PITX2 P1 promoter transcription activation. Associates with chromatin to the PITX2 P1 promoter region. This chain is Transcription factor AP-2-alpha (TFAP2A), found in Ovis aries (Sheep).